Here is a 700-residue protein sequence, read N- to C-terminus: Polyribonucleotide nucleotidyltransferase (700 aa).

Mg(2+)-binding residues include Asp485 and Asp491. The region spanning 552-611 is the KH domain; it reads PRITVIKINPEKIRDVIGKGGAVIRALTEETGTTIELEDDGTVKIASSNGEATKEAIRRI. In terms of domain architecture, S1 motif spans 621-689; sequence GRIYNGKVIR…RQGRVRLSIK (69 aa).

This sequence belongs to the polyribonucleotide nucleotidyltransferase family. In terms of assembly, component of the RNA degradosome, which is a multiprotein complex involved in RNA processing and mRNA degradation. Requires Mg(2+) as cofactor.

Its subcellular location is the cytoplasm. The catalysed reaction is RNA(n+1) + phosphate = RNA(n) + a ribonucleoside 5'-diphosphate. Involved in mRNA degradation. Catalyzes the phosphorolysis of single-stranded polyribonucleotides processively in the 3'- to 5'-direction. This chain is Polyribonucleotide nucleotidyltransferase, found in Shewanella baltica (strain OS155 / ATCC BAA-1091).